The primary structure comprises 59 residues: Large ribosomal subunit protein bL32 (59 aa).

The protein belongs to the bacterial ribosomal protein bL32 family.

This chain is Large ribosomal subunit protein bL32, found in Malacoplasma penetrans (strain HF-2) (Mycoplasma penetrans).